A 382-amino-acid chain; its full sequence is Elloramycin glycosyltransferase ElmGT (382 aa).

It belongs to the glycosyltransferase 28 family.

The enzyme catalyses 8-demethyltetracenomycin C + dTDP-beta-L-rhamnose = 8-demethyl-8-alpha-L-rhamnosyl-tetracenomycin C + dTDP + H(+). It functions in the pathway antibiotic biosynthesis. Functionally, glycosyltransferase that transfers an L-rhamnose moiety from dTDP-L-rhamnose to the elloramycin aglycone 8-demethyl-tetracenomycin C (8DMTC) in elloramycin biosynthesis, an antitumor polyketide. Possesses donor substrate flexibility: able to transfer at least 11 different sugars to 8DMTC, such as NDP-D-glucose, as well as NDP-L-digitoxose, including both L- and D-isomeric forms of some sugars. The sequence is that of Elloramycin glycosyltransferase ElmGT from Streptomyces olivaceus.